Here is a 177-residue protein sequence, read N- to C-terminus: Parathyroid hormone-related protein (177 aa).

Positions 1–24 (MLRRLVQQWGVAVFLLSYSVPSCG) are cleaved as a signal peptide. A propeptide spanning residues 25–34 (RSVEELGRRL) is cleaved from the precursor. The tract at residues 57 to 68 (RFFLHHLIAEIH) is important for receptor binding. Residues 74–177 (ATSEVSPNSK…TSLELNLRRH (104 aa)) form a disordered region. Polar residues predominate over residues 76–90 (SEVSPNSKPAPNTKN). The short motif at 108–129 (TNKVETYKEQPLKTPGKKKKGK) is the Nuclear localization signal element. A compositionally biased stretch (basic and acidic residues) spans 109–118 (NKVETYKEQP). Residues 122–132 (PGKKKKGKPGK) are compositionally biased toward basic residues.

The protein belongs to the parathyroid hormone family. As to quaternary structure, PTHrP interacts with PTH1R (via N-terminal extracellular domain). In terms of processing, there are several secretory forms, including osteostatin, arising from endoproteolytic cleavage of the initial translation product. Each of these secretory forms is believed to have one or more of its own receptors that mediates the normal paracrine, autocrine and endocrine actions.

It localises to the secreted. Its subcellular location is the cytoplasm. The protein resides in the nucleus. In terms of biological role, neuroendocrine peptide which is a critical regulator of cellular and organ growth, development, migration, differentiation and survival and of epithelial calcium ion transport. Acts by binding to its receptor, PTH1R, activating G protein-coupled receptor signaling. Regulates endochondral bone development and epithelial-mesenchymal interactions during the formation of the mammary glands and teeth. Required for skeletal homeostasis. Promotes mammary mesenchyme differentiation and bud outgrowth by modulating mesenchymal cell responsiveness to BMPs. Up-regulates BMPR1A expression in the mammary mesenchyme and this increases the sensitivity of these cells to BMPs and allows them to respond to BMP4 in a paracrine and/or autocrine fashion. BMP4 signaling in the mesenchyme, in turn, triggers epithelial outgrowth and augments MSX2 expression, which causes the mammary mesenchyme to inhibit hair follicle formation within the nipple sheath. Potent inhibitor of osteoclastic bone resorption. The chain is Parathyroid hormone-related protein (PTHLH) from Canis lupus familiaris (Dog).